We begin with the raw amino-acid sequence, 207 residues long: Cytochrome c biogenesis ATP-binding export protein CcmA (207 aa).

Positions 4–207 constitute an ABC transporter domain; sequence LEARELLCER…RISLTQTRAA (204 aa). 36–43 provides a ligand contact to ATP; sequence GSNGAGKT.

This sequence belongs to the ABC transporter superfamily. CcmA exporter (TC 3.A.1.107) family. As to quaternary structure, the complex is composed of two ATP-binding proteins (CcmA) and two transmembrane proteins (CcmB).

The protein localises to the cell inner membrane. The catalysed reaction is heme b(in) + ATP + H2O = heme b(out) + ADP + phosphate + H(+). Functionally, part of the ABC transporter complex CcmAB involved in the biogenesis of c-type cytochromes; once thought to export heme, this seems not to be the case, but its exact role is uncertain. Responsible for energy coupling to the transport system. In Shigella sonnei (strain Ss046), this protein is Cytochrome c biogenesis ATP-binding export protein CcmA.